We begin with the raw amino-acid sequence, 137 residues long: Global transcriptional regulator Spx (137 aa).

The cysteines at positions 10 and 13 are disulfide-linked.

It belongs to the ArsC family. Spx subfamily. In terms of assembly, interacts with the C-terminal domain of the alpha subunit of the RNAP.

The protein resides in the cytoplasm. Global transcriptional regulator that plays a key role in stress response and exerts either positive or negative regulation of genes. Acts by interacting with the C-terminal domain of the alpha subunit of the RNA polymerase (RNAP). This interaction can enhance binding of RNAP to the promoter region of target genes and stimulate their transcription, or block interaction of RNAP with activator. This chain is Global transcriptional regulator Spx, found in Streptococcus agalactiae serotype III (strain NEM316).